The following is a 262-amino-acid chain: Nurim (262 aa).

Residues 1-4 (MAPA) are Nuclear-facing. The helical transmembrane segment at 5-28 (LLLIPAALASFILAFGTGVEFVRF) threads the bilayer. At 29-58 (TSLRPLLGRISESGSPDARQGWLAALQDQS) the chain is on the perinuclear space side. Residues 59-80 (ILVPLVWDLGLLLLFVGQHSLM) traverse the membrane as a helical segment. Over 81 to 97 (ATETVKEWMSRYFGVLQ) the chain is Nuclear. A helical membrane pass occupies residues 98 to 114 (RSLYVACTALALQLVMR). Topologically, residues 115 to 133 (YWEPVPRGPVLWETRTEPW) are perinuclear space. Residues 134 to 164 (ATWVPLLCFVLHVISWLLIFSILLVFDYAEL) form a helical membrane-spanning segment. Residues 165–191 (MGLKQVYYHVLGLGEPLALKSPRALRL) are Nuclear-facing. The helical transmembrane segment at 192 to 210 (FSHLRHPVCVELLTVLWVV) threads the bilayer. The Perinuclear space portion of the chain corresponds to 211-216 (PTLGTD). A helical membrane pass occupies residues 217–234 (RLLLALLLTLYLGLAHGL). The Nuclear portion of the chain corresponds to 235 to 262 (DQHDLRYLRAQLQRKLHLLSRPQDGEAE).

This sequence belongs to the nurim family.

Its subcellular location is the nucleus inner membrane. The chain is Nurim (NRM) from Bos taurus (Bovine).